Reading from the N-terminus, the 362-residue chain is NAD(P)H-quinone oxidoreductase subunit 1, chloroplastic (362 aa).

Helical transmembrane passes span 26-48 (LIWI…VIVW), 97-119 (FSIG…PLGY), 126-148 (LSIG…LMAG), 163-185 (AAAQ…SLLS), 254-276 (LFYL…LYLG), 296-318 (IIGI…LFLF), and 338-360 (LGWK…FQLV).

Belongs to the complex I subunit 1 family. NDH is composed of at least 16 different subunits, 5 of which are encoded in the nucleus.

It is found in the plastid. The protein resides in the chloroplast thylakoid membrane. The enzyme catalyses a plastoquinone + NADH + (n+1) H(+)(in) = a plastoquinol + NAD(+) + n H(+)(out). The catalysed reaction is a plastoquinone + NADPH + (n+1) H(+)(in) = a plastoquinol + NADP(+) + n H(+)(out). Functionally, NDH shuttles electrons from NAD(P)H:plastoquinone, via FMN and iron-sulfur (Fe-S) centers, to quinones in the photosynthetic chain and possibly in a chloroplast respiratory chain. The immediate electron acceptor for the enzyme in this species is believed to be plastoquinone. Couples the redox reaction to proton translocation, and thus conserves the redox energy in a proton gradient. This is NAD(P)H-quinone oxidoreductase subunit 1, chloroplastic (ndhA) from Zea mays (Maize).